We begin with the raw amino-acid sequence, 338 residues long: 1-aminocyclopropane-1-carboxylate deaminase (338 aa).

N6-(pyridoxal phosphate)lysine is present on K51. S78 functions as the Nucleophile in the catalytic mechanism.

Belongs to the ACC deaminase/D-cysteine desulfhydrase family. In terms of assembly, homotrimer. It depends on pyridoxal 5'-phosphate as a cofactor.

The enzyme catalyses 1-aminocyclopropane-1-carboxylate + H2O = 2-oxobutanoate + NH4(+). Its function is as follows. Catalyzes a cyclopropane ring-opening reaction, the irreversible conversion of 1-aminocyclopropane-1-carboxylate (ACC) to ammonia and alpha-ketobutyrate. Allows growth on ACC as a nitrogen source. This is 1-aminocyclopropane-1-carboxylate deaminase from Burkholderia cenocepacia (strain HI2424).